Reading from the N-terminus, the 197-residue chain is Endonuclease V (197 aa).

2 residues coordinate Mg(2+): D37 and E101.

The protein belongs to the endonuclease V family. Mg(2+) is required as a cofactor.

The protein resides in the cytoplasm. It catalyses the reaction Endonucleolytic cleavage at apurinic or apyrimidinic sites to products with a 5'-phosphate.. In terms of biological role, DNA repair enzyme involved in the repair of deaminated bases. Selectively cleaves double-stranded DNA at the second phosphodiester bond 3' to a deoxyinosine leaving behind the intact lesion on the nicked DNA. The protein is Endonuclease V of Thermococcus kodakarensis (strain ATCC BAA-918 / JCM 12380 / KOD1) (Pyrococcus kodakaraensis (strain KOD1)).